The following is a 510-amino-acid chain: GTPase Der (510 aa).

2 EngA-type G domains span residues 3–167 (LKLA…GPEA) and 230–405 (IRLA…KDWT). Residues 9-16 (GRPNVGKS), 56-60 (DTAGF), 119-122 (NKAE), 236-243 (GRPNAGKS), 283-287 (DTAGL), and 348-351 (SKWD) each bind GTP. The region spanning 406–490 (ARAKTGDLNR…PIRLFVRQGK (85 aa)) is the KH-like domain.

The protein belongs to the TRAFAC class TrmE-Era-EngA-EngB-Septin-like GTPase superfamily. EngA (Der) GTPase family. In terms of assembly, associates with the 50S ribosomal subunit.

Its function is as follows. GTPase that plays an essential role in the late steps of ribosome biogenesis. The chain is GTPase Der from Hyphomonas neptunium (strain ATCC 15444).